The primary structure comprises 72 residues: Large ribosomal subunit protein bL32 (72 aa).

This sequence belongs to the bacterial ribosomal protein bL32 family.

In Dehalococcoides mccartyi (strain ATCC BAA-2266 / KCTC 15142 / 195) (Dehalococcoides ethenogenes (strain 195)), this protein is Large ribosomal subunit protein bL32.